A 303-amino-acid polypeptide reads, in one-letter code: Acetaldehyde dehydrogenase 1 (303 aa).

C130 (acyl-thioester intermediate) is an active-site residue. Residues 161–169 (SVGPGTRKN) and N272 contribute to the NAD(+) site.

The protein belongs to the acetaldehyde dehydrogenase family.

The catalysed reaction is acetaldehyde + NAD(+) + CoA = acetyl-CoA + NADH + H(+). In Cupriavidus metallidurans (strain ATCC 43123 / DSM 2839 / NBRC 102507 / CH34) (Ralstonia metallidurans), this protein is Acetaldehyde dehydrogenase 1.